Here is a 167-residue protein sequence, read N- to C-terminus: uncharacterized protein (167 aa).

This is an uncharacterized protein from Acidianus bottle-shaped virus (isolate Italy/Pozzuoli) (ABV).